The chain runs to 1002 residues: MESVRTLWLSVALALAVGSRVVRGHPQPCRVPTRAGASVRLAALLPRAPAARARVLAALATPAPRLPHNLSLELVAVASPTRDPASLARGLCQVLAPPGVVASIAFPEARPELRLLQFLAAATETPVVSVLRREVRTALGAPTPFHLQLDWASPLETILDVLVSLVRAHAWEDIALVLCRVRDPGSLVTLWTNHASQAPKFVLDLSRLDSRNDSLRAGLALLGALEGGGTPVPAAVLLGCSTARAHEVLEAAPPGPQWLLGTPLPAEALPTTGLPPGVLALGETEQHSLEAVVHDMVELVAQALSSMALVHPERALLPAVVNCDDLKTGGSEATGRTLARFLGNTSFQGRTGAVWVTGSSQVHVSRHFKVWSLRRDPLGAPAWATVGSWQDGQLDFQPGAAALRVPSPSGTQARPKLRVVTLVEHPFVFTRESDEDGQCPAGQLCLDPGTNDSARLDALFAALVNGSVPRTLRRCCYGYCIDLLERLAEDLAFDFELYIVGDGKYGALRDGRWTGLVGDLLAGRAHMAVTSFSINSARSQVVDFTSPFFSTSLGIMVRTRDTASPIGAFMWPLHWSMWVGVFAALHLTALFLTLYEWRSPYGLTPRGRNRGTVFSYSSALNLCYAILFGRTVSSKTPKCPTGRFLMNLWAIFCLLVLSSYTANLAAVMVGDKTFEELSGIHDPKLHHPSQGFRFGTVWESSAEAYIKASFPEMHAHMRRHSAPTTPHGVAMLTSDPPKLNAFIMDKSLLDYEVSIDADCKLLTVGKPFAIEGYGIGLPQNSPLTSNLSEFISRYKSSGFIDLLHDKWYKMVPCGKRVFAVTETLQMGVYHFSGLFVLLCLGLGSALLTSLGEHVFYRLVLPRIRRGNKLQYWLHTSQKIHRALNTGPPEGQQERAEQERSGPKDELPATDGAGRWRRVRRAVERERRVRFLLEPGEAGGDRPWLCSNGPGLQAELRELELRIEAARERLRSALLRRGELRALLGDGTRLRPLRLLHAAPAES.

An N-terminal signal peptide occupies residues 1–24 (MESVRTLWLSVALALAVGSRVVRG). At 25 to 574 (HPQPCRVPTR…PIGAFMWPLH (550 aa)) the chain is on the extracellular side. Residues asparagine 69, asparagine 212, asparagine 344, asparagine 451, and asparagine 465 are each glycosylated (N-linked (GlcNAc...) asparagine). Intrachain disulfides connect cysteine 439–cysteine 475 and cysteine 445–cysteine 476. Serine 531, serine 533, and arginine 538 together coordinate glycine. Residues serine 533 and arginine 538 each contribute to the D-serine site. Residues 575 to 594 (WSMWVGVFAALHLTALFLTL) traverse the membrane as a helical segment. Residues 595-615 (YEWRSPYGLTPRGRNRGTVFS) are Cytoplasmic-facing. The discontinuously helical intramembrane region spans 616–627 (YSSALNLCYAIL). The Cytoplasmic portion of the chain corresponds to 628 to 641 (FGRTVSSKTPKCPT). Residues 642–661 (GRFLMNLWAIFCLLVLSSYT) form a helical membrane-spanning segment. The Extracellular portion of the chain corresponds to 662–832 (ANLAAVMVGD…TLQMGVYHFS (171 aa)). Serine 701 contacts glycine. Residues serine 701, alanine 702, and aspartate 745 each contribute to the D-serine site. Aspartate 745 contributes to the glycine binding site. Asparagine 786 carries N-linked (GlcNAc...) asparagine glycosylation. Residues 833–848 (GLFVLLCLGLGSALLT) traverse the membrane as a helical segment. Topologically, residues 849-1002 (SLGEHVFYRL…RLLHAAPAES (154 aa)) are cytoplasmic. The segment at 882–910 (ALNTGPPEGQQERAEQERSGPKDELPATD) is disordered. The span at 891 to 906 (QQERAEQERSGPKDEL) shows a compositional bias: basic and acidic residues. Positions 944–985 (LCSNGPGLQAELRELELRIEAARERLRSALLRRGELRALLGD) form a coiled coil. The involved in the trafficking and surface expression of NMDARs stretch occupies residues 951–984 (LQAELRELELRIEAARERLRSALLRRGELRALLG).

It belongs to the glutamate-gated ion channel (TC 1.A.10.1) family. NR3B/GRIN3B subfamily. As to quaternary structure, forms heterotetrameric channels that contain at least two GluN1 subunits and at least a combination of one GluN2 and one GluN3 subunits (in vitro). Forms heterotetrameric channels composed of two GluN1/zeta subunits (GRIN1), and two identical GluN3 subunits (GRIN3A or GRIN3B) (in vitro). Does not form functional homomeric channels. As to expression, expressed in the hippocampus, the corpus callosum, in the facial and trigeminal nuclei of the brainstem and the ventral horn of the spinal cord.

It is found in the cell membrane. The protein resides in the postsynaptic cell membrane. The enzyme catalyses Ca(2+)(in) = Ca(2+)(out). The catalysed reaction is Na(+)(in) = Na(+)(out). Its activity is regulated as follows. Excitatory glycine receptors are inhibited by D-serine at a concentrion of 100uM. Functionally, component of a non-conventional N-methyl-D-aspartate (NMDA) receptors (NMDARs) that function as heterotetrameric, ligand-gated cation channels with low calcium permeability and low voltage-dependent block by Mg(2+). Forms glutamatergic receptor complexes with GluN1 and GluN2 subunits which are activated by glycine binding to the GluN1 and GluN3 subunits and L-glutamate binding to GluN2 subunits. Forms excitatory glycinergic receptor complexes with GluN1 alone which are activated by glycine binding to the GluN1 and GluN3 subunits. GluN3B subunit also binds D-serine and, in the absence of glycine, activates glycinergic receptor complexes, but with lower efficacy than glycine. Each GluN3 subunit confers differential attributes to channel properties, including activation, deactivation and desensitization kinetics, pH sensitivity, Ca2(+) permeability, and binding to allosteric modulators. The sequence is that of Glutamate receptor ionotropic, NMDA 3B from Rattus norvegicus (Rat).